A 219-amino-acid chain; its full sequence is MISNSEYHKEYMKGTTTVGLLCKDGVVLATDKRATMGNLIADKEAKKLYKIDDYIAMTIAGSVGDAQSLIRLISAEAKIYKMRTGNNMTPLSCTTLISNVLHGNRHYPLLTQLILGGYDLINGAKLFSLDPVGGINEESSFTATGSGSPTAYGVLEAEYRSDVTIDKGLLVAVKALSSAMQRDAYSGNGISLAHINKDGVNIYSDEEIEGFLKKINKKR.

The propeptide at 1 to 14 (MISNSEYHKEYMKG) is removed in mature form; by autocatalysis. The active-site Nucleophile is the threonine 15.

The protein belongs to the peptidase T1B family. In terms of assembly, the 20S proteasome core is composed of 14 alpha and 14 beta subunits that assemble into four stacked heptameric rings, resulting in a barrel-shaped structure. The two inner rings, each composed of seven catalytic beta subunits, are sandwiched by two outer rings, each composed of seven alpha subunits. The catalytic chamber with the active sites is on the inside of the barrel. Has a gated structure, the ends of the cylinder being occluded by the N-termini of the alpha-subunits. Is capped at one or both ends by the proteasome regulatory ATPase, PAN.

The protein resides in the cytoplasm. It carries out the reaction Cleavage of peptide bonds with very broad specificity.. Its activity is regulated as follows. The formation of the proteasomal ATPase PAN-20S proteasome complex, via the docking of the C-termini of PAN into the intersubunit pockets in the alpha-rings, triggers opening of the gate for substrate entry. Interconversion between the open-gate and close-gate conformations leads to a dynamic regulation of the 20S proteasome proteolysis activity. Functionally, component of the proteasome core, a large protease complex with broad specificity involved in protein degradation. In Methanococcus maripaludis (strain C6 / ATCC BAA-1332), this protein is Proteasome subunit beta.